Reading from the N-terminus, the 378-residue chain is Acetylornithine deacetylase (378 aa).

His76 provides a ligand contact to Zn(2+). Asp78 is a catalytic residue. A Zn(2+)-binding site is contributed by Asp108. Glu140 is an active-site residue. Residues Glu141, Glu165, and His351 each contribute to the Zn(2+) site.

It belongs to the peptidase M20A family. ArgE subfamily. Homodimer. Zn(2+) is required as a cofactor. The cofactor is Co(2+). It depends on glutathione as a cofactor.

It is found in the cytoplasm. It catalyses the reaction N(2)-acetyl-L-ornithine + H2O = L-ornithine + acetate. It participates in amino-acid biosynthesis; L-arginine biosynthesis; L-ornithine from N(2)-acetyl-L-ornithine (linear): step 1/1. Its function is as follows. Catalyzes the hydrolysis of the amide bond of N(2)-acetylated L-amino acids. Cleaves the acetyl group from N-acetyl-L-ornithine to form L-ornithine, an intermediate in L-arginine biosynthesis pathway, and a branchpoint in the synthesis of polyamines. The sequence is that of Acetylornithine deacetylase from Vibrio campbellii (strain ATCC BAA-1116).